The chain runs to 166 residues: Small ribosomal subunit protein uS5 (166 aa).

An S5 DRBM domain is found at 12-75 (YIEKLVQVNR…EAARRNMIQV (64 aa)).

The protein belongs to the universal ribosomal protein uS5 family. As to quaternary structure, part of the 30S ribosomal subunit. Contacts proteins S4 and S8.

In terms of biological role, with S4 and S12 plays an important role in translational accuracy. Located at the back of the 30S subunit body where it stabilizes the conformation of the head with respect to the body. The sequence is that of Small ribosomal subunit protein uS5 from Ectopseudomonas mendocina (strain ymp) (Pseudomonas mendocina).